A 306-amino-acid polypeptide reads, in one-letter code: Homoserine kinase (306 aa).

ATP is bound at residue Pro-95–Ala-105.

The protein belongs to the GHMP kinase family. Homoserine kinase subfamily.

Its subcellular location is the cytoplasm. It catalyses the reaction L-homoserine + ATP = O-phospho-L-homoserine + ADP + H(+). It functions in the pathway amino-acid biosynthesis; L-threonine biosynthesis; L-threonine from L-aspartate: step 4/5. In terms of biological role, catalyzes the ATP-dependent phosphorylation of L-homoserine to L-homoserine phosphate. The polypeptide is Homoserine kinase (Mycobacteroides abscessus (strain ATCC 19977 / DSM 44196 / CCUG 20993 / CIP 104536 / JCM 13569 / NCTC 13031 / TMC 1543 / L948) (Mycobacterium abscessus)).